We begin with the raw amino-acid sequence, 176 residues long: NADH-quinone oxidoreductase subunit B 1 (176 aa).

Residues C55, C56, C120, and C150 each coordinate [4Fe-4S] cluster.

The protein belongs to the complex I 20 kDa subunit family. As to quaternary structure, NDH-1 is composed of 14 different subunits. Subunits NuoB, C, D, E, F, and G constitute the peripheral sector of the complex. [4Fe-4S] cluster serves as cofactor.

The protein localises to the cell inner membrane. It catalyses the reaction a quinone + NADH + 5 H(+)(in) = a quinol + NAD(+) + 4 H(+)(out). In terms of biological role, NDH-1 shuttles electrons from NADH, via FMN and iron-sulfur (Fe-S) centers, to quinones in the respiratory chain. Couples the redox reaction to proton translocation (for every two electrons transferred, four hydrogen ions are translocated across the cytoplasmic membrane), and thus conserves the redox energy in a proton gradient. This chain is NADH-quinone oxidoreductase subunit B 1, found in Cereibacter sphaeroides (strain ATCC 17029 / ATH 2.4.9) (Rhodobacter sphaeroides).